Reading from the N-terminus, the 389-residue chain is S-adenosylmethionine synthase (389 aa).

His19 contributes to the ATP binding site. Residue Asp21 coordinates Mg(2+). K(+) is bound at residue Glu47. Residues Glu60 and Gln103 each coordinate L-methionine. The interval Gln103 to Arg113 is flexible loop. Residues Asp168–Lys170, Arg234–Phe235, Asp243, Arg249–Lys250, Ala266, and Lys270 contribute to the ATP site. Asp243 contributes to the L-methionine binding site. Position 274 (Lys274) interacts with L-methionine.

It belongs to the AdoMet synthase family. In terms of assembly, homotetramer; dimer of dimers. Mg(2+) is required as a cofactor. The cofactor is K(+).

The protein localises to the cytoplasm. The enzyme catalyses L-methionine + ATP + H2O = S-adenosyl-L-methionine + phosphate + diphosphate. The protein operates within amino-acid biosynthesis; S-adenosyl-L-methionine biosynthesis; S-adenosyl-L-methionine from L-methionine: step 1/1. Functionally, catalyzes the formation of S-adenosylmethionine (AdoMet) from methionine and ATP. The overall synthetic reaction is composed of two sequential steps, AdoMet formation and the subsequent tripolyphosphate hydrolysis which occurs prior to release of AdoMet from the enzyme. The sequence is that of S-adenosylmethionine synthase from Nitratidesulfovibrio vulgaris (strain DSM 19637 / Miyazaki F) (Desulfovibrio vulgaris).